The primary structure comprises 63 residues: UPF0370 protein PC1_1167 (63 aa).

Residues 3–23 (WLADYWWIILIILIGMLINGI) form a helical membrane-spanning segment. Residues 37 to 63 (NKPKLPPHRDNNDKWDDEDDDWPKKKP) form a disordered region.

This sequence belongs to the UPF0370 family.

It is found in the cell membrane. The chain is UPF0370 protein PC1_1167 from Pectobacterium carotovorum subsp. carotovorum (strain PC1).